Consider the following 150-residue polypeptide: Large ribosomal subunit protein uL15 (150 aa).

The segment at 1–52 (MDLSNLKPAEGSVRKNSKRIGRGEGSGKGGTATRGHKGAKSRSGYSKKIGFE) is disordered. The segment covering 23 to 32 (GEGSGKGGTA) has biased composition (gly residues).

It belongs to the universal ribosomal protein uL15 family. In terms of assembly, part of the 50S ribosomal subunit.

Its function is as follows. Binds to the 23S rRNA. The polypeptide is Large ribosomal subunit protein uL15 (Christiangramia forsetii (strain DSM 17595 / CGMCC 1.15422 / KT0803) (Gramella forsetii)).